The following is a 285-amino-acid chain: HTH-type transcriptional regulator HexR (285 aa).

The HTH rpiR-type domain maps to 2–78 (KNLLEQIQSR…IQLAQSLASG (77 aa)). The segment at residues 38–57 (IAALAQAAAVSEPTVNRFCR) is a DNA-binding region (H-T-H motif). Residues 122–261 (AVDLLIQARQ…ATGVTLRRGV (140 aa)) form the SIS domain.

Its function is as follows. Involved in regulation of glucose metabolism. Transcriptional repressor of the gap-1 gene and of the edd-glk-gltR-2 and zwf-pgl-eda operons. Acts by binding directly to an inverted pseudopalindromic sequence in the promoter region. In Pseudomonas aeruginosa (strain ATCC 15692 / DSM 22644 / CIP 104116 / JCM 14847 / LMG 12228 / 1C / PRS 101 / PAO1), this protein is HTH-type transcriptional regulator HexR.